The following is a 542-amino-acid chain: Phosphoacetylglucosamine mutase (542 aa).

M1 bears the N-acetylmethionine mark. T62 bears the Phosphothreonine mark. S64 functions as the Phosphoserine intermediate in the catalytic mechanism. Mg(2+) contacts are provided by S64, D276, D278, and D280. S64 is modified (phosphoserine). Residues 370 to 372 (EAN), 496 to 500 (RPSGT), and R505 contribute to the substrate site.

It belongs to the phosphohexose mutase family. It depends on Mg(2+) as a cofactor. Found in many tissues except lung. Relatively high expression in pancreas, heart, liver, and placenta, and relatively low expression in brain, skeletal muscle and kidney.

The enzyme catalyses N-acetyl-alpha-D-glucosamine 1-phosphate = N-acetyl-D-glucosamine 6-phosphate. It participates in nucleotide-sugar biosynthesis; UDP-N-acetyl-alpha-D-glucosamine biosynthesis; N-acetyl-alpha-D-glucosamine 1-phosphate from alpha-D-glucosamine 6-phosphate (route I): step 2/2. Catalyzes the conversion of GlcNAc-6-P into GlcNAc-1-P during the synthesis of uridine diphosphate/UDP-GlcNAc, a sugar nucleotide critical to multiple glycosylation pathways including protein N- and O-glycosylation. The sequence is that of Phosphoacetylglucosamine mutase from Homo sapiens (Human).